We begin with the raw amino-acid sequence, 238 residues long: 7-cyano-7-deazaguanine synthase (238 aa).

12–22 (FSGGQDSTTCL) serves as a coordination point for ATP. Cysteine 191, cysteine 200, cysteine 203, and cysteine 206 together coordinate Zn(2+).

The protein belongs to the QueC family. Zn(2+) serves as cofactor.

The catalysed reaction is 7-carboxy-7-deazaguanine + NH4(+) + ATP = 7-cyano-7-deazaguanine + ADP + phosphate + H2O + H(+). The protein operates within purine metabolism; 7-cyano-7-deazaguanine biosynthesis. Its function is as follows. Catalyzes the ATP-dependent conversion of 7-carboxy-7-deazaguanine (CDG) to 7-cyano-7-deazaguanine (preQ(0)). This is 7-cyano-7-deazaguanine synthase from Shewanella oneidensis (strain ATCC 700550 / JCM 31522 / CIP 106686 / LMG 19005 / NCIMB 14063 / MR-1).